We begin with the raw amino-acid sequence, 91 residues long: MPRPTGKKFDKRRQQQNPLFKRKKFCRFTAAGVDQIDYKDTETLKDFIGENGKITPARLTGTKAHYQRQLDTAIKRARFLALLPYTDQHKA.

This sequence belongs to the bacterial ribosomal protein bS18 family. Part of the 30S ribosomal subunit. Forms a tight heterodimer with protein bS6.

Its function is as follows. Binds as a heterodimer with protein bS6 to the central domain of the 16S rRNA, where it helps stabilize the platform of the 30S subunit. This chain is Small ribosomal subunit protein bS18, found in Burkholderia ambifaria (strain MC40-6).